A 386-amino-acid chain; its full sequence is Succinyl-diaminopimelate desuccinylase (386 aa).

His-72 contacts Zn(2+). Asp-74 is an active-site residue. Asp-105 serves as a coordination point for Zn(2+). The Proton acceptor role is filled by Glu-139. Zn(2+) contacts are provided by Glu-140, Glu-168, and His-353.

It belongs to the peptidase M20A family. DapE subfamily. Homodimer. The cofactor is Zn(2+). Co(2+) serves as cofactor.

The enzyme catalyses N-succinyl-(2S,6S)-2,6-diaminopimelate + H2O = (2S,6S)-2,6-diaminopimelate + succinate. It functions in the pathway amino-acid biosynthesis; L-lysine biosynthesis via DAP pathway; LL-2,6-diaminopimelate from (S)-tetrahydrodipicolinate (succinylase route): step 3/3. Catalyzes the hydrolysis of N-succinyl-L,L-diaminopimelic acid (SDAP), forming succinate and LL-2,6-diaminopimelate (DAP), an intermediate involved in the bacterial biosynthesis of lysine and meso-diaminopimelic acid, an essential component of bacterial cell walls. The chain is Succinyl-diaminopimelate desuccinylase from Rhodospirillum centenum (strain ATCC 51521 / SW).